A 216-amino-acid polypeptide reads, in one-letter code: Phosphoserine phosphatase (216 aa).

Asp10 acts as the Nucleophile in catalysis. Mg(2+) is bound by residues Asp10 and Asp12. Asp12 functions as the Proton donor in the catalytic mechanism. Residues Glu19, Arg55, 98–99 (SG), and Lys143 each bind substrate. Asp166 contacts Mg(2+). Asn169 is a substrate binding site.

The protein belongs to the HAD-like hydrolase superfamily. SerB family. Mg(2+) is required as a cofactor.

It carries out the reaction O-phospho-L-serine + H2O = L-serine + phosphate. The enzyme catalyses O-phospho-D-serine + H2O = D-serine + phosphate. Its pathway is amino-acid biosynthesis; L-serine biosynthesis; L-serine from 3-phospho-D-glycerate: step 3/3. In Lactococcus lactis subsp. lactis (strain IL1403) (Streptococcus lactis), this protein is Phosphoserine phosphatase.